The chain runs to 607 residues: Probable LRR receptor-like serine/threonine-protein kinase At5g65240 (607 aa).

Positions 1–24 (MALLIITALVFSSLWSSVSPDAQG) are cleaved as a signal peptide. Over 25–219 (DALFALRSSL…SGDSSSRKTG (195 aa)) the chain is Extracellular. N-linked (GlcNAc...) asparagine glycans are attached at residues asparagine 74 and asparagine 110. 4 LRR repeats span residues 87–111 (LTTL…IGNL), 112–135 (SSLT…LGNL), 137–159 (NLQF…LTGL), and 160–183 (SKLI…LFKI). Residues asparagine 149, asparagine 171, asparagine 187, and asparagine 192 are each glycosylated (N-linked (GlcNAc...) asparagine). Residues 220 to 240 (IIAGVVSGIAVILLGFFFFFF) form a helical membrane-spanning segment. Over 241 to 607 (CKDKHKGYKR…QDAIELSGGR (367 aa)) the chain is Cytoplasmic. Residue threonine 281 is modified to Phosphothreonine. Positions 284-568 (FSEKNVLGQG…EGEGLAERWE (285 aa)) constitute a Protein kinase domain. 290 to 298 (LGQGGFGKV) provides a ligand contact to ATP. A Phosphothreonine modification is found at threonine 307. Lysine 312 contacts ATP. Residue serine 365 is modified to Phosphoserine. Aspartate 411 acts as the Proton acceptor in catalysis. Threonine 444, threonine 445, and threonine 450 each carry phosphothreonine. Phosphoserine is present on serine 460. The residue at position 461 (threonine 461) is a Phosphothreonine. At serine 465 the chain carries Phosphoserine. At threonine 541 the chain carries Phosphothreonine.

This sequence belongs to the protein kinase superfamily. Ser/Thr protein kinase family.

The protein localises to the cell membrane. The catalysed reaction is L-seryl-[protein] + ATP = O-phospho-L-seryl-[protein] + ADP + H(+). It carries out the reaction L-threonyl-[protein] + ATP = O-phospho-L-threonyl-[protein] + ADP + H(+). The protein is Probable LRR receptor-like serine/threonine-protein kinase At5g65240 of Arabidopsis thaliana (Mouse-ear cress).